The primary structure comprises 21 residues: Peptide PGLa-R6 (21 aa).

Leucine amide is present on Leu21.

In terms of tissue distribution, expressed by the skin glands.

The protein localises to the secreted. Functionally, antimicrobial peptide. This is Peptide PGLa-R6 from Xenopus ruwenzoriensis (Uganda clawed frog).